Reading from the N-terminus, the 607-residue chain is MTVPLDRIRNFSIIAHIDHGKSTLADRLIQRTGGLTDREMSAQVLDNMDIEKERGITIKAQTVRLDYKAKDGQDYVLNLMDTPGHVDFAYEVSRSLAACEGALLVVDAAQGVEAQTLANVYQSIEHDHEIVPVINKIDLPAAEPDKVKAEIEDIIGLPADDAVLASAKSGIGIDEILEAIVARIPAPKGDPAAPLKAMLVDSWYDPYLGVVILIRVVEGTIRKGQQIKFMQADTVHLVDRVGCFRPKIEQLGEMGPGEIGFITAQIKEVSQTAVGDTITDARKPTAEPLPGFKEVQPVVFCGLFPVDAADFEKLRESLYKLRLNDASFSFEAESSAALGFGFRCGFLGLLHLEIIQERLTREYDLDLITTAPSVVYRLHLSHSKTEDAKVIELHNPADMPDPNRIDMIEEPWIEATIYVPDEYLGSLLKLCQDRRGIQKNLTYVGGRAQITYELPLNEVVFDFYDRLKSISRGYASFDYHQIGYREGDLVKMSIMVNGEPVDALSMIVHRAAAEARGRHMCERLKDLIPRHLFKIPVQAAIGGKVIARETIAAMRKDVTAKCYGGDATRKRKLLEKQKEGKKRMREYGNVNIPQEAFIAALRMGDEG.

Residues 6-188 (DRIRNFSIIA…AIVARIPAPK (183 aa)) form the tr-type G domain. GTP is bound by residues 18-23 (DHGKST) and 135-138 (NKID).

The protein belongs to the TRAFAC class translation factor GTPase superfamily. Classic translation factor GTPase family. LepA subfamily.

The protein localises to the cell inner membrane. It carries out the reaction GTP + H2O = GDP + phosphate + H(+). Required for accurate and efficient protein synthesis under certain stress conditions. May act as a fidelity factor of the translation reaction, by catalyzing a one-codon backward translocation of tRNAs on improperly translocated ribosomes. Back-translocation proceeds from a post-translocation (POST) complex to a pre-translocation (PRE) complex, thus giving elongation factor G a second chance to translocate the tRNAs correctly. Binds to ribosomes in a GTP-dependent manner. This chain is Elongation factor 4, found in Rhizorhabdus wittichii (strain DSM 6014 / CCUG 31198 / JCM 15750 / NBRC 105917 / EY 4224 / RW1) (Sphingomonas wittichii).